Here is a 205-residue protein sequence, read N- to C-terminus: Outer-membrane lipoprotein LolB (205 aa).

The signal sequence occupies residues 1-17 (MFLRHFIVFSFIALLAG). A lipid anchor (N-palmitoyl cysteine) is attached at Cys18. Cys18 is lipidated: S-diacylglycerol cysteine.

It belongs to the LolB family. As to quaternary structure, monomer.

Its subcellular location is the cell outer membrane. Its function is as follows. Plays a critical role in the incorporation of lipoproteins in the outer membrane after they are released by the LolA protein. The chain is Outer-membrane lipoprotein LolB from Pseudomonas fluorescens (strain ATCC BAA-477 / NRRL B-23932 / Pf-5).